The following is a 681-amino-acid chain: MRKKLFGQLQRIGKALMLPVAILPAAGLLLAIGTAMQGESLQHYLPFIQNGGVQTVAKLMTGAGGIIFDNLPMIFALGVAIGLAGGDGVAAIAAFVGYIIMNKTMGDFLQVTPKNIGDPASGYASILGIPTLQTGVFGGIIIGALAAWCYNKFYNINLPSYLGFFAGKRFVPIMMATTSFILAFPMALIWPTIQSGLNAFSTGLLDSNTGVAVFLFGFIKRLLIPFGLHHIFHAPFWFEFGSWKNAAGEIIHGDQRIFIEQIREGAHLTAGKFMQGEFPVMMFGLPAAALAIYHTAKPENKKVVAGLMGSAALTSFLTGITEPLEFSFLFVAPLLFFIHAVLDGLSFLTLYLLDLHLGYTFSGGFIDYFLLGILPNKTQWWLVIPVGLVYAVIYYFVFRFLIVKLKYKTPGREDKQSQAATASATELPYAVLEAMGGKANIKHLDACITRLRVEVNDKSKVDVPGLKDLGASGVLEVGNNMQAIFGPKSDQIKHEMQQIMNGQVVENPTTMEDDKDETVVVAEDKSATSELSHIVHAPLTGEVTPLSEVPDQVFSEKMMGDGIAIKPSQGEVRAPFNGKVQMIFPTKHAIGLVSDSGLELLIHIGLDTVKLNGEGFTLHVEEGQEVKQGDLLINFDLDYIRNHAKSDITPIIVTQGNITNLDFKQGEHGNISFGDQLFEAK.

Residues 3-414 enclose the PTS EIIC type-1 domain; the sequence is KKLFGQLQRI…LKYKTPGRED (412 aa). 10 helical membrane-spanning segments follow: residues 16–36, 73–93, 126–146, 170–190, 199–219, 273–293, 303–323, 328–348, 355–375, and 383–403; these read LMLP…GTAM, MIFA…AAIA, ILGI…GALA, FVPI…ALIW, AFST…FGFI, FMQG…LAIY, VVAG…ITEP, FLFV…LSFL, LHLG…GILP, and VIPV…FLIV. Residues 425 to 506 enclose the PTS EIIB type-1 domain; it reads TELPYAVLEA…QQIMNGQVVE (82 aa). The active-site Phosphocysteine intermediate; for EIIB activity is the Cys-447. In terms of domain architecture, PTS EIIA type-1 spans 551-655; that stretch reads DQVFSEKMMG…SDITPIIVTQ (105 aa). His-603 serves as the catalytic Tele-phosphohistidine intermediate; for EIIA activity.

It localises to the cell membrane. It catalyses the reaction N(pros)-phospho-L-histidyl-[protein] + D-glucose(out) = D-glucose 6-phosphate(in) + L-histidyl-[protein]. In terms of biological role, the phosphoenolpyruvate-dependent sugar phosphotransferase system (sugar PTS), a major carbohydrate active transport system, catalyzes the phosphorylation of incoming sugar substrates concomitantly with their translocation across the cell membrane. This system is involved in glucose transport. This Staphylococcus aureus (strain NCTC 8325 / PS 47) protein is PTS system glucose-specific EIICBA component (ptsG).